The chain runs to 444 residues: E1B 55 kDa protein (444 aa).

The segment at 1–27 (MEQDSDLESGRATNQRPPRVRVRGAGV) is disordered. Residues Ser438 and Ser439 each carry the phosphoserine modification.

It belongs to the adenoviridae E1B 55 kDa protein family. Interacts with host PML-4 and PML-5; this interaction promotes efficient subnuclear targeting of E1B-55K to PML nuclear bodies. Interacts with E4-ORF3 protein. Interacts with E4-ORF6 protein.

It localises to the host nucleus. It is found in the host cytoplasm. In terms of biological role, plays a major role to prevent cellular inhibition of viral genome replication. Assembles an SCF-like E3 ubiquitin ligase complex based on the cellular proteins ELOB, ELOC, CUL5 and RBX1, in cooperation with viral E4orf6. This viral RING-type ligase ubiquitinates cellular substrates and targets them to proteasomal degradation: TP53/p53, LIG4, MRE11-RAD50-NBS1 (MRN) complex, ITGA3, DAXX and BLM. E1B-55K probably acts as the substrate-specific adapter of the SCF-like E3 ubiquitin ligase complex. Degradation of host TP53/p53 activity is essential for preventing E1A-induced TP53 accumulation that would otherwise lead to cell apoptosis and growth arrest. E1B-55K also inactivates TP53 transcription-factor activity by binding its transactivation domain. E1B-55K also functions as a SUMO1 E3 ligase for TP53 which causes the latter to be sequestered in promyelocytic leukemia (PML) nuclear bodies thereby contributing to maximal inhibition of TP53 function. This is E1B 55 kDa protein from Canis lupus familiaris (Dog).